The following is a 209-amino-acid chain: Interleukin-6 (209 aa).

The N-terminal stretch at 1 to 26 (RFTSAFSPVAFSLGLLLVMATAFPTP) is a signal peptide. The segment at 28 to 47 (PVGGESQADATSNRPPLTSP) is disordered. C69 and C75 form a disulfide bridge. S78 bears the Phosphoserine mark. An intrachain disulfide couples C98 to C108.

Belongs to the IL-6 superfamily. Component of a hexamer of two molecules each of IL6, IL6R and IL6ST; first binds to IL6R to associate with the signaling subunit IL6ST. Interacts with IL6R (via the N-terminal ectodomain); this interaction may be affected by IL6R-binding with SORL1, hence decreasing IL6 cis signaling. Interacts with SORL1 (via the N-terminal ectodomain); this interaction leads to IL6 internalization and lysosomal degradation. May form a trimeric complex with the soluble SORL1 ectodomain and soluble IL6R receptor; this interaction might stabilize circulating IL6, hence promoting IL6 trans signaling.

Its subcellular location is the secreted. In terms of biological role, cytokine with a wide variety of biological functions in immunity, tissue regeneration, and metabolism. Binds to IL6R, then the complex associates to the signaling subunit IL6ST/gp130 to trigger the intracellular IL6-signaling pathway. The interaction with the membrane-bound IL6R and IL6ST stimulates 'classic signaling', whereas the binding of IL6 and soluble IL6R to IL6ST stimulates 'trans-signaling'. Alternatively, 'cluster signaling' occurs when membrane-bound IL6:IL6R complexes on transmitter cells activate IL6ST receptors on neighboring receiver cells. Functionally, IL6 is a potent inducer of the acute phase response. Rapid production of IL6 contributes to host defense during infection and tissue injury, but excessive IL6 synthesis is involved in disease pathology. In the innate immune response, is synthesized by myeloid cells, such as macrophages and dendritic cells, upon recognition of pathogens through toll-like receptors (TLRs) at the site of infection or tissue injury. In the adaptive immune response, is required for the differentiation of B cells into immunoglobulin-secreting cells. Plays a major role in the differentiation of CD4(+) T cell subsets. Essential factor for the development of T follicular helper (Tfh) cells that are required for the induction of germinal-center formation. Required to drive naive CD4(+) T cells to the Th17 lineage. Also required for proliferation of myeloma cells and the survival of plasmablast cells. Acts as an essential factor in bone homeostasis and on vessels directly or indirectly by induction of VEGF, resulting in increased angiogenesis activity and vascular permeability. Induces, through 'trans-signaling' and synergistically with IL1B and TNF, the production of VEGF. Involved in metabolic controls, is discharged into the bloodstream after muscle contraction increasing lipolysis and improving insulin resistance. 'Trans-signaling' in central nervous system also regulates energy and glucose homeostasis. Mediates, through GLP-1, crosstalk between insulin-sensitive tissues, intestinal L cells and pancreatic islets to adapt to changes in insulin demand. Also acts as a myokine. Plays a protective role during liver injury, being required for maintenance of tissue regeneration. Also has a pivotal role in iron metabolism by regulating HAMP/hepcidin expression upon inflammation or bacterial infection. Through activation of IL6ST-YAP-NOTCH pathway, induces inflammation-induced epithelial regeneration. This Phoca vitulina (Harbor seal) protein is Interleukin-6 (IL6).